The chain runs to 188 residues: MTRPEASGPPDATRLGHLLGPHGVQGGIKLYVLGDPAQVLALKRVYVESRGWLSLRRAEGMPPNLVLYLAGVSSREGAEELRGLQVYATDAELPDLEEGTFYYHDLRGLEVYGAGGERLGTVSDVMDAGHQDLLVVDYGGGTSFVPLQAPYVEVPLAGGKPGAVHLTADAPAGLIGPEPGEEDGAAES.

Residues 98-174 (EGTFYYHDLR…HLTADAPAGL (77 aa)) enclose the PRC barrel domain. The tract at residues 169 to 188 (DAPAGLIGPEPGEEDGAAES) is disordered. Over residues 179 to 188 (PGEEDGAAES) the composition is skewed to acidic residues.

Belongs to the RimM family. In terms of assembly, binds ribosomal protein uS19.

It is found in the cytoplasm. In terms of biological role, an accessory protein needed during the final step in the assembly of 30S ribosomal subunit, possibly for assembly of the head region. Essential for efficient processing of 16S rRNA. May be needed both before and after RbfA during the maturation of 16S rRNA. It has affinity for free ribosomal 30S subunits but not for 70S ribosomes. The sequence is that of Ribosome maturation factor RimM from Deinococcus radiodurans (strain ATCC 13939 / DSM 20539 / JCM 16871 / CCUG 27074 / LMG 4051 / NBRC 15346 / NCIMB 9279 / VKM B-1422 / R1).